The chain runs to 606 residues: MLLNACCKKNLWPRNGSTIFRRFALKLRPYQEECLSACLNAFDEGKRRIAVSLATGSGKTALFPHFIKYAPTLRPNSEQCLILVHRKELALQALKHCRESLPNKSIEIDMGNQCASGLADVTVASVFSLKNERLLKYNPLNFKLLIFDEVHHMASPSYLRILEHFGAESEKSKVNVIGLTATLFRADGKGLACGLDEIVYHRHFVDMIKDNWLVEPKVINIKWSTDLVLADSSSFLDQEKLKKEAQSEKAIFEIPRAWLEHASNRSSTLVFCINVEHSLKVCNAFRKLGIDARALFGETNDSERETLIQDFRKKKFPVLVNCMVLTEGTDIPNIDCLMIARPTSSPNLLTQMIGRGLRLHEGKRDCLILDFCDSLRRVSLHVDPTLAGLSPDEVENFYNKSKNSLANPDYDPKIYGLQSVLWYSKLRKLIEMMDNIKNKDRSIFNLSTNAWVAVGMGRYVLSFLQKVLIIDTNFEDGTHKISEYTKEKLGTRVYNRKRIVSDRIPSLKFAIRAAETYISNLKTPRSLISRKAVWRMRPASVRQINFLKKSNLKLDEKLLTAGVAADMITKVIYGGKGRQVRTDKLQSYLKHDANLKRITTLKELKG.

The 162-residue stretch at 40-201 (NAFDEGKRRI…ACGLDEIVYH (162 aa)) folds into the Helicase ATP-binding domain. 53-60 (LATGSGKT) is an ATP binding site. The short motif at 148 to 151 (DEVH) is the DEAH box element. Residues 246-398 (QSEKAIFEIP…LSPDEVENFY (153 aa)) enclose the Helicase C-terminal domain.

Belongs to the helicase family. IRC3 subfamily.

Its subcellular location is the mitochondrion. The polypeptide is Putative mitochondrial ATP-dependent helicase irc3 (irc3) (Schizosaccharomyces pombe (strain 972 / ATCC 24843) (Fission yeast)).